The sequence spans 264 residues: S-adenosylmethionine decarboxylase proenzyme (264 aa).

The active-site Schiff-base intermediate with substrate; via pyruvic acid is the Ser112. Pyruvic acid (Ser); by autocatalysis is present on Ser112. The active-site Proton acceptor; for processing activity is His117. The active-site Proton donor; for catalytic activity is the Cys140.

The protein belongs to the prokaryotic AdoMetDC family. Type 2 subfamily. As to quaternary structure, heterooctamer of four alpha and four beta chains arranged as a tetramer of alpha/beta heterodimers. Pyruvate serves as cofactor. Is synthesized initially as an inactive proenzyme. Formation of the active enzyme involves a self-maturation process in which the active site pyruvoyl group is generated from an internal serine residue via an autocatalytic post-translational modification. Two non-identical subunits are generated from the proenzyme in this reaction, and the pyruvate is formed at the N-terminus of the alpha chain, which is derived from the carboxyl end of the proenzyme. The post-translation cleavage follows an unusual pathway, termed non-hydrolytic serinolysis, in which the side chain hydroxyl group of the serine supplies its oxygen atom to form the C-terminus of the beta chain, while the remainder of the serine residue undergoes an oxidative deamination to produce ammonia and the pyruvoyl group blocking the N-terminus of the alpha chain.

The catalysed reaction is S-adenosyl-L-methionine + H(+) = S-adenosyl 3-(methylsulfanyl)propylamine + CO2. Its pathway is amine and polyamine biosynthesis; S-adenosylmethioninamine biosynthesis; S-adenosylmethioninamine from S-adenosyl-L-methionine: step 1/1. Functionally, catalyzes the decarboxylation of S-adenosylmethionine to S-adenosylmethioninamine (dcAdoMet), the propylamine donor required for the synthesis of the polyamines spermine and spermidine from the diamine putrescine. This is S-adenosylmethionine decarboxylase proenzyme from Photorhabdus laumondii subsp. laumondii (strain DSM 15139 / CIP 105565 / TT01) (Photorhabdus luminescens subsp. laumondii).